The sequence spans 258 residues: MGKKDKRWVLQRKNDHYYNLAKKRNYRSRATYKLFQLNEKFNLIKERNVVVDLGCAPGGWLQAARDIVGDKGFIVGIDLQTVKPLPYENVIAIKGDMTKEEILKQARDLLPEKPDVIICDASPNISGVWDVDHARSLELTTMALMTATKMLKKGGNFVVKVFQGDLFEKYVQLVSEYFDKAFTTKPRASRDESAEVYVIGKRFNGRKFDMNSKSPIVKLLDTNPKENEITSPSLRKDISKEDSGLMIKRIKEMRSKKE.

Positions 58, 60, 78, 96, and 120 each coordinate S-adenosyl-L-methionine. The Proton acceptor role is filled by Lys160.

It belongs to the class I-like SAM-binding methyltransferase superfamily. RNA methyltransferase RlmE family.

It is found in the cytoplasm. The catalysed reaction is uridine(2552) in 23S rRNA + S-adenosyl-L-methionine = 2'-O-methyluridine(2552) in 23S rRNA + S-adenosyl-L-homocysteine + H(+). Functionally, specifically methylates the uridine in position 2552 of 23S rRNA at the 2'-O position of the ribose in the fully assembled 50S ribosomal subunit. This is Ribosomal RNA large subunit methyltransferase E from Methanococcus maripaludis (strain C5 / ATCC BAA-1333).